We begin with the raw amino-acid sequence, 655 residues long: UvrABC system protein C (655 aa).

In terms of domain architecture, GIY-YIG spans 16 to 95 (TDPGVYRFRD…IKEFAPRYNL (80 aa)). The UVR domain occupies 207 to 242 (KRFIGTLEKQMAEAVAELDYERAARLRDDVIALRKV).

This sequence belongs to the UvrC family. As to quaternary structure, interacts with UvrB in an incision complex.

The protein localises to the cytoplasm. In terms of biological role, the UvrABC repair system catalyzes the recognition and processing of DNA lesions. UvrC both incises the 5' and 3' sides of the lesion. The N-terminal half is responsible for the 3' incision and the C-terminal half is responsible for the 5' incision. The protein is UvrABC system protein C of Renibacterium salmoninarum (strain ATCC 33209 / DSM 20767 / JCM 11484 / NBRC 15589 / NCIMB 2235).